We begin with the raw amino-acid sequence, 104 residues long: Large ribosomal subunit protein uL24 (104 aa).

The protein belongs to the universal ribosomal protein uL24 family. In terms of assembly, part of the 50S ribosomal subunit.

Functionally, one of two assembly initiator proteins, it binds directly to the 5'-end of the 23S rRNA, where it nucleates assembly of the 50S subunit. In terms of biological role, one of the proteins that surrounds the polypeptide exit tunnel on the outside of the subunit. In Cronobacter sakazakii (strain ATCC BAA-894) (Enterobacter sakazakii), this protein is Large ribosomal subunit protein uL24.